We begin with the raw amino-acid sequence, 420 residues long: Glutamate-1-semialdehyde 2,1-aminomutase (420 aa).

K259 is subject to N6-(pyridoxal phosphate)lysine.

Belongs to the class-III pyridoxal-phosphate-dependent aminotransferase family. HemL subfamily. As to quaternary structure, homodimer. The cofactor is pyridoxal 5'-phosphate.

It localises to the cytoplasm. The enzyme catalyses (S)-4-amino-5-oxopentanoate = 5-aminolevulinate. It participates in porphyrin-containing compound metabolism; protoporphyrin-IX biosynthesis; 5-aminolevulinate from L-glutamyl-tRNA(Glu): step 2/2. The chain is Glutamate-1-semialdehyde 2,1-aminomutase from Nautilia profundicola (strain ATCC BAA-1463 / DSM 18972 / AmH).